A 545-amino-acid chain; its full sequence is T-complex protein 1 subunit gamma (545 aa).

Position 1 is an N-acetylmethionine (methionine 1). Positions 1-24 are disordered; sequence MMGHRPVLVLSQNTKRESGRKVQS. At serine 11 the chain carries Phosphoserine. Lysine 15 participates in a covalent cross-link: Glycyl lysine isopeptide (Lys-Gly) (interchain with G-Cter in SUMO2). An ADP-binding site is contributed by glycine 42. Glycine 42 is an ATP binding site. Mg(2+) is bound at residue aspartate 93. ADP-binding residues include glycine 94, threonine 95, threonine 96, serine 97, threonine 162, and lysine 163. Residues glycine 94, threonine 95, and threonine 96 each contribute to the ATP site. Residue serine 170 is modified to Phosphoserine. An N6-acetyllysine modification is found at lysine 222. Serine 243 and serine 244 each carry phosphoserine. Tyrosine 247 carries the phosphotyrosine modification. Glycyl lysine isopeptide (Lys-Gly) (interchain with G-Cter in SUMO2) cross-links involve residues lysine 248 and lysine 249. Serine 252 is subject to Phosphoserine. A disulfide bond links cysteine 366 and cysteine 372. Lysine 381 participates in a covalent cross-link: Glycyl lysine isopeptide (Lys-Gly) (interchain with G-Cter in SUMO2). Glycine 411 serves as a coordination point for ADP. Glycine 411 serves as a coordination point for ATP. A phosphothreonine mark is found at threonine 430 and threonine 459. ADP-binding residues include glycine 482, glutamate 483, glutamate 497, and lysine 502. Glycine 482 contacts ATP. Glutamate 497 serves as a coordination point for ATP. The tract at residues 526-545 is disordered; the sequence is HKKKGDDQNRQTGAPDAGQE.

Belongs to the TCP-1 chaperonin family. Component of the chaperonin-containing T-complex (TRiC), a hexadecamer composed of two identical back-to-back stacked rings enclosing a protein folding chamber. Each ring is made up of eight different subunits: TCP1/CCT1, CCT2, CCT3, CCT4, CCT5, CCT6A/CCT6, CCT7, CCT8. Interacts with PACRG. Interacts with DNAAF4. Interacts with DLEC1. The N-terminus is blocked.

The protein localises to the cytoplasm. The enzyme catalyses ATP + H2O = ADP + phosphate + H(+). Its function is as follows. Component of the chaperonin-containing T-complex (TRiC), a molecular chaperone complex that assists the folding of actin, tubulin and other proteins upon ATP hydrolysis. The TRiC complex mediates the folding of WRAP53/TCAB1, thereby regulating telomere maintenance. As part of the TRiC complex may play a role in the assembly of BBSome, a complex involved in ciliogenesis regulating transports vesicles to the cilia. The protein is T-complex protein 1 subunit gamma (Cct3) of Mus musculus (Mouse).